A 433-amino-acid polypeptide reads, in one-letter code: Glutamate-1-semialdehyde 2,1-aminomutase (433 aa).

K266 is subject to N6-(pyridoxal phosphate)lysine.

The protein belongs to the class-III pyridoxal-phosphate-dependent aminotransferase family. HemL subfamily. Homodimer. The cofactor is pyridoxal 5'-phosphate.

Its subcellular location is the cytoplasm. It carries out the reaction (S)-4-amino-5-oxopentanoate = 5-aminolevulinate. It participates in porphyrin-containing compound metabolism; protoporphyrin-IX biosynthesis; 5-aminolevulinate from L-glutamyl-tRNA(Glu): step 2/2. In Psychrobacter arcticus (strain DSM 17307 / VKM B-2377 / 273-4), this protein is Glutamate-1-semialdehyde 2,1-aminomutase.